The chain runs to 143 residues: Fluoride-specific ion channel FluC (143 aa).

4 consecutive transmembrane segments (helical) span residues 3–23, 41–61, 76–96, and 103–123; these read AVVW…GSGL, WGTL…LIWL, IVGL…CLVF, and LMVG…VFLG. Na(+) contacts are provided by Gly81 and Thr84.

This sequence belongs to the fluoride channel Fluc/FEX (TC 1.A.43) family.

It is found in the cell inner membrane. The catalysed reaction is fluoride(in) = fluoride(out). Na(+) is not transported, but it plays an essential structural role and its presence is essential for fluoride channel function. In terms of biological role, fluoride-specific ion channel. Important for reducing fluoride concentration in the cell, thus reducing its toxicity. The polypeptide is Fluoride-specific ion channel FluC (Xylella fastidiosa (strain 9a5c)).